The primary structure comprises 32 residues: Photosystem I reaction center subunit XII (32 aa).

The chain crosses the membrane as a helical span at residues valine 9 to tyrosine 31.

The protein belongs to the PsaM family.

The protein localises to the plastid. It localises to the chloroplast thylakoid membrane. The polypeptide is Photosystem I reaction center subunit XII (Chaetosphaeridium globosum (Charophycean green alga)).